Consider the following 329-residue polypeptide: Putative dehydrogenase RB0419 (329 aa).

This sequence belongs to the ornithine cyclodeaminase/mu-crystallin family.

This chain is Putative dehydrogenase RB0419, found in Rhizobium meliloti (strain 1021) (Ensifer meliloti).